A 374-amino-acid chain; its full sequence is Phospho-N-acetylmuramoyl-pentapeptide-transferase (374 aa).

The next 10 membrane-spanning stretches (helical) occupy residues 3–23, 52–72, 85–105, 125–145, 170–190, 201–221, 244–264, 271–291, 294–314, and 350–370; these read AVIVAVGVAFLVSLFCTPIAI, MGGVVFILATVIAYVAGHLAL, PTITALVLLGLMVFSGAVGFI, LLGQILVGAVFGVIALYFPST, IPALELTKVGAVVLFIFVVMA, LDGLATGASVMVLAAYALIAF, PLEIALIAGAAAGACVGFLWW, IFMGDTGALGLGGLIAGMAMS, TILLLPIIGGLFVIITMSVVI, and FWIIAGIGVAIALGLFYSEFL.

The protein belongs to the glycosyltransferase 4 family. MraY subfamily. It depends on Mg(2+) as a cofactor.

It is found in the cell membrane. The enzyme catalyses UDP-N-acetyl-alpha-D-muramoyl-L-alanyl-gamma-D-glutamyl-meso-2,6-diaminopimeloyl-D-alanyl-D-alanine + di-trans,octa-cis-undecaprenyl phosphate = di-trans,octa-cis-undecaprenyl diphospho-N-acetyl-alpha-D-muramoyl-L-alanyl-D-glutamyl-meso-2,6-diaminopimeloyl-D-alanyl-D-alanine + UMP. The protein operates within cell wall biogenesis; peptidoglycan biosynthesis. In terms of biological role, catalyzes the initial step of the lipid cycle reactions in the biosynthesis of the cell wall peptidoglycan: transfers peptidoglycan precursor phospho-MurNAc-pentapeptide from UDP-MurNAc-pentapeptide onto the lipid carrier undecaprenyl phosphate, yielding undecaprenyl-pyrophosphoryl-MurNAc-pentapeptide, known as lipid I. In Salinispora arenicola (strain CNS-205), this protein is Phospho-N-acetylmuramoyl-pentapeptide-transferase.